The chain runs to 567 residues: Synaptotagmin-like protein 1 (567 aa).

Residues 31-87 (LLDLSFLTEEEQEAISDVLKRDAHLRQLEEGRVSKLRASLEDPWQLKILTGDWFQEA) enclose the RabBD domain. A disordered region spans residues 103–255 (RASIRRKKSP…VSSLNSSTLS (153 aa)). S120 is subject to Phosphoserine. Composition is skewed to acidic residues over residues 122-135 (GEAE…IEGE) and 170-184 (GQEE…ELEA). A compositionally biased stretch (polar residues) spans 208 to 219 (ESQPTPAQSKAT). S220 carries the post-translational modification Phosphoserine. Residues 235-255 (SLDRMLSSSSSVSSLNSSTLS) are compositionally biased toward low complexity. C2 domains lie at 271-390 (VRGS…WLPL) and 403-532 (SRGL…VPWM).

In terms of assembly, monomer. Binds NCF2 and NRXN1. Binds RAB27A that has been activated by GTP-binding via its N-terminus. In terms of tissue distribution, highly expressed in lung. Detected at lower levels in spleen, liver and kidney, and at very low levels in heart, brain and skeletal muscle. Expressed in cytotoxic T-lymphocytes (CTL).

It is found in the endomembrane system. The protein resides in the cell membrane. In terms of biological role, binds phosphatidylinositol 3,4,5-trisphosphate. May play a role in vesicle trafficking. Acts as a RAB27A effector protein and may play a role in cytotoxic granule exocytosis in lymphocytes. The chain is Synaptotagmin-like protein 1 (Sytl1) from Mus musculus (Mouse).